Consider the following 484-residue polypeptide: Aspartyl/glutamyl-tRNA(Asn/Gln) amidotransferase subunit B (484 aa).

It belongs to the GatB/GatE family. GatB subfamily. Heterotrimer of A, B and C subunits.

It catalyses the reaction L-glutamyl-tRNA(Gln) + L-glutamine + ATP + H2O = L-glutaminyl-tRNA(Gln) + L-glutamate + ADP + phosphate + H(+). It carries out the reaction L-aspartyl-tRNA(Asn) + L-glutamine + ATP + H2O = L-asparaginyl-tRNA(Asn) + L-glutamate + ADP + phosphate + 2 H(+). Functionally, allows the formation of correctly charged Asn-tRNA(Asn) or Gln-tRNA(Gln) through the transamidation of misacylated Asp-tRNA(Asn) or Glu-tRNA(Gln) in organisms which lack either or both of asparaginyl-tRNA or glutaminyl-tRNA synthetases. The reaction takes place in the presence of glutamine and ATP through an activated phospho-Asp-tRNA(Asn) or phospho-Glu-tRNA(Gln). This Cupriavidus metallidurans (strain ATCC 43123 / DSM 2839 / NBRC 102507 / CH34) (Ralstonia metallidurans) protein is Aspartyl/glutamyl-tRNA(Asn/Gln) amidotransferase subunit B.